Reading from the N-terminus, the 1235-residue chain is Major DNA-binding protein (1235 aa).

The interval 536–584 is disordered; that stretch reads GGLDGKGDDGVPGGGAGGGGGRDVSGGPSDGLGGGRGGGGGGDSGGMMG. Positions 545–584 are enriched in gly residues; it reads GVPGGGAGGGGGRDVSGGPSDGLGGGRGGGGGGDSGGMMG. The short motif at 846–847 is the Required for filament formation element; sequence FW. Gly residues predominate over residues 1214 to 1226; that stretch reads GVGGSSGGGGGSG. The disordered stretch occupies residues 1214–1235; the sequence is GVGGSSGGGGGSGLLPAKRSRL. The required for nuclear localization stretch occupies residues 1232–1235; sequence RSRL.

Belongs to the herpesviridae major DNA-binding protein family. In terms of assembly, homooligomers. Forms double-helical filaments necessary for the formation of replication compartments within the host nucleus. Interacts with the origin-binding protein. Interacts with the helicase primase complex; this interaction stimulates primer synthesis activity of the helicase-primase complex. Interacts with the DNA polymerase. Interacts with the alkaline exonuclease; this interaction increases its nuclease processivity.

The protein localises to the host nucleus. In terms of biological role, plays several crucial roles in viral infection. Participates in the opening of the viral DNA origin to initiate replication by interacting with the origin-binding protein. May disrupt loops, hairpins and other secondary structures present on ssDNA to reduce and eliminate pausing of viral DNA polymerase at specific sites during elongation. Promotes viral DNA recombination by performing strand-transfer, characterized by the ability to transfer a DNA strand from a linear duplex to a complementary single-stranded DNA circle. Can also catalyze the renaturation of complementary single strands. Additionally, reorganizes the host cell nucleus, leading to the formation of prereplicative sites and replication compartments. This process is driven by the protein which can form double-helical filaments in the absence of DNA. In Homo sapiens (Human), this protein is Major DNA-binding protein.